Here is a 257-residue protein sequence, read N- to C-terminus: MIEFRNVSKVYPNGTKGLNNINLKIQKGEFVIMVGLSGAGKSTLLKSVNRLHEITEGEIMIECESITAAKGKDLRRMRRDIGMIFQSFNLVKRSTVLKNVLAGRVGYHSTLRTTLGLFPKEDVELAFQALKRVNILEKAYARADELSGGQQQRVSIARALAQEAKIILADEPVASLDPLTTKQVLDDLKKINEDFGITTIVNLHSIALARQYATRIIGLHAGEIVFDGLVEAATDEKFAEIYGDVAQKSELLEVAAK.

An ABC transporter domain is found at 2–246 (IEFRNVSKVY…KFAEIYGDVA (245 aa)). An ATP-binding site is contributed by 35 to 42 (GLSGAGKS).

Belongs to the ABC transporter superfamily. Phosphonates importer (TC 3.A.1.9.1) family. The complex is composed of two ATP-binding proteins (PhnC), two transmembrane proteins (PhnE) and a solute-binding protein (PhnD).

Its subcellular location is the cell membrane. It carries out the reaction phosphonate(out) + ATP + H2O = phosphonate(in) + ADP + phosphate + H(+). In terms of biological role, part of the ABC transporter complex PhnCDE involved in phosphonates import. Responsible for energy coupling to the transport system. The sequence is that of Phosphonates import ATP-binding protein PhnC from Bacillus cereus (strain ATCC 14579 / DSM 31 / CCUG 7414 / JCM 2152 / NBRC 15305 / NCIMB 9373 / NCTC 2599 / NRRL B-3711).